Reading from the N-terminus, the 380-residue chain is Acyl-coenzyme A diphosphatase SCS3 (380 aa).

Over 1–7 (MSSKWFN) the chain is Cytoplasmic. Residues 8–28 (AIHLLVCPLTVLVGYLMNAYG) form a helical membrane-spanning segment. Over 29-43 (YGAALQATLNKDGLV) the chain is Lumenal. The chain crosses the membrane as a helical span at residues 44 to 64 (NAMLVKKGWFWTSLVGWWCII). At 65 to 88 (RYRAVPGATGRDRRHIVQSFKRYA) the chain is on the cytoplasmic side. A helical membrane pass occupies residues 89-109 (ILTVWWYVFTQGIWFGVGPIM). The Lumenal segment spans residues 110–233 (DLVFVYTGGH…GHWAGGHDPS (124 aa)). A helical transmembrane segment spans residues 234-254 (GHVFLATLMCMFLLGELRVFG). Residue His235 is part of the active site. At 255-325 (RRALAHLYAQ…LTRCIACDHP (71 aa)) the chain is on the cytoplasmic side. The helical transmembrane segment at 326-346 (VIILLTLLVTWLWQLLLTAVA) threads the bilayer. Residues 347–356 (SRFHTVREHM) lie on the Lumenal side of the membrane. His350 is an active-site residue. The helical transmembrane segment at 357 to 377 (SGLLAAYIVTGLVYARDAAAL) threads the bilayer. Over 378-380 (RPV) the chain is Cytoplasmic.

This sequence belongs to the FIT family. Fungal FIT2B/SCS3 subfamily.

The protein resides in the endoplasmic reticulum membrane. It catalyses the reaction an acyl-CoA + H2O = an acyl-4'-phosphopantetheine + adenosine 3',5'-bisphosphate + 2 H(+). The enzyme catalyses (9Z)-octadecenoyl-CoA + H2O = S-(9Z-octadecenoyl)-4'-phosphopantetheine + adenosine 3',5'-bisphosphate + 2 H(+). It carries out the reaction (5Z,8Z,11Z,14Z)-eicosatetraenoyl-CoA + H2O = S-(5Z,8Z,11Z,14Z-eicosatetraenoyl)-4'-phosphopantetheine + adenosine 3',5'-bisphosphate + 2 H(+). The catalysed reaction is hexadecanoyl-CoA + H2O = S-hexadecanoyl-4'-phosphopantetheine + adenosine 3',5'-bisphosphate + 2 H(+). Its function is as follows. Fatty acyl-coenzyme A (CoA) diphosphatase that hydrolyzes fatty acyl-CoA to yield acyl-4'-phosphopantetheine and adenosine 3',5'-bisphosphate. Preferentially hydrolyzes unsaturated long-chain acyl-CoA substrates in the endoplasmic reticulum (ER) lumen. This catalytic activity is required for maintaining ER structure and for lipid droplets (LDs) biogenesis, which are lipid storage organelles involved in maintaining lipid and energy homeostasis. May directly bind to diacylglycerol (DAGs) and triacylglycerol, which is also important for LD biogenesis. May support directional budding of nacent LDs from the ER into the cytosol by reducing DAG levels at sites of LD formation. May play a role in the regulation of cell morphology and cytoskeletal organization. Involved in phospholipid biosynthesis. This Saccharomyces cerevisiae (strain ATCC 204508 / S288c) (Baker's yeast) protein is Acyl-coenzyme A diphosphatase SCS3.